The chain runs to 479 residues: Ammonium transporter Rh type C (479 aa).

Residues 1 to 9 (MAWNTNLRW) are Cytoplasmic-facing. The helical transmembrane segment at 10–30 (RLPLTCLLLQVVMVILFGVFV) threads the bilayer. At 31 to 60 (RYDFEADAHWWSERTHKNLSDVENEFYYRY) the chain is on the extracellular side. A glycan (N-linked (GlcNAc...) asparagine) is linked at Asn-48. A helical membrane pass occupies residues 61-81 (PSFQDVHVMVFVGFGFLMTFL). Topologically, residues 82 to 85 (QRYG) are cytoplasmic. The chain crosses the membrane as a helical span at residues 86-106 (FSAVGFNFLLAAFGIQWALLM). The Extracellular portion of the chain corresponds to 107–123 (QGWFHFLQGRYIVVGVE). Residues 124–144 (NLINADFCVASVCVAFGAVLG) form a helical membrane-spanning segment. Residues 145 to 148 (KVSP) are Cytoplasmic-facing. A helical membrane pass occupies residues 149-169 (IQLLIMTFFQVTLFAVNEFIL). Topologically, residues 170–177 (LNLLKVKD) are extracellular. The helical transmembrane segment at 178–200 (AGGSMTIHTFGAYFGLTVTRILY) threads the bilayer. Over 201 to 218 (RRNLEQSKERQNSVYQSD) the chain is Cytoplasmic. Residues 219 to 239 (LFAMIGTLFLWMYWPSFNSAI) form a helical membrane-spanning segment. Over 240–250 (SYHGDSQHRAA) the chain is Extracellular. A helical transmembrane segment spans residues 251–271 (INTYCSLAACVLTSVAISSAL). The Cytoplasmic segment spans residues 272–281 (HKKGKLDMVH). A helical membrane pass occupies residues 282 to 302 (IQNATLAGGVAVGTAAEMMLM). Position 303 (Pro-303) is a topological domain, extracellular. The chain crosses the membrane as a helical span at residues 304–324 (YGALIIGFVCGIISTLGFVYL). Residues 325 to 345 (TPFLESRLHIQDTCGINNLHG) lie on the Cytoplasmic side of the membrane. Residues 346–366 (IPGIIGGIVGAVTAASASLEV) traverse the membrane as a helical segment. At 367–394 (YGKEGLVHSFDFQGFKGDWTARTQGKFQ) the chain is on the extracellular side. A helical transmembrane segment spans residues 395–415 (IYGLLVTLAMALMGGIIVGLI). At 416 to 479 (LRLPFWGQPS…PMASSVPLVP (64 aa)) the chain is on the cytoplasmic side.

It belongs to the ammonium transporter (TC 2.A.49) family. Rh subfamily. As to quaternary structure, homotrimer. N-glycosylated.

It is found in the cell membrane. The protein resides in the apical cell membrane. It catalyses the reaction NH4(+)(in) = NH4(+)(out). The enzyme catalyses methylamine(out) = methylamine(in). The catalysed reaction is CO2(out) = CO2(in). In terms of biological role, ammonium transporter involved in the maintenance of acid-base homeostasis. Transports ammonium and its related derivative methylammonium across the plasma membrane of epithelial cells likely contributing to renal transepithelial ammonia transport and ammonia metabolism. Postulated to primarily mediate an electroneutral bidirectional transport of NH3 ammonia species according to a mechanism that implies interaction of an NH4(+) ion with acidic residues of the pore entry followed by dissociation of NH4(+) into NH3 and H(+). As a result NH3 transits through the central pore and is protonated on the extracellular side reforming NH4(+). May act as a CO2 channel providing for renal acid secretion. The polypeptide is Ammonium transporter Rh type C (RHCG) (Pan troglodytes (Chimpanzee)).